The chain runs to 625 residues: Chaperone protein HtpG (625 aa).

An a; substrate-binding region spans residues 1-332; the sequence is MSNKQNTAVQ…TEDLSLNVSR (332 aa). Residues 333 to 545 are b; sequence EIVQSSPVMS…KDAMDSQMER (213 aa). Positions 546–625 are c; sequence MMKMMQQEMP…ELIEAATLSR (80 aa).

Belongs to the heat shock protein 90 family. In terms of assembly, homodimer.

The protein resides in the cytoplasm. Functionally, molecular chaperone. Has ATPase activity. The protein is Chaperone protein HtpG of Chlorobium luteolum (strain DSM 273 / BCRC 81028 / 2530) (Pelodictyon luteolum).